A 250-amino-acid polypeptide reads, in one-letter code: 2,3-bisphosphoglycerate-dependent phosphoglycerate mutase (250 aa).

Substrate is bound by residues 8–15 (RHGQSAWN), 21–22 (TG), arginine 60, 87–90 (ERHY), lysine 98, 114–115 (RR), and 183–184 (GN). Residue histidine 9 is the Tele-phosphohistidine intermediate of the active site. Glutamate 87 functions as the Proton donor/acceptor in the catalytic mechanism.

This sequence belongs to the phosphoglycerate mutase family. BPG-dependent PGAM subfamily. Homodimer.

The catalysed reaction is (2R)-2-phosphoglycerate = (2R)-3-phosphoglycerate. The protein operates within carbohydrate degradation; glycolysis; pyruvate from D-glyceraldehyde 3-phosphate: step 3/5. Catalyzes the interconversion of 2-phosphoglycerate and 3-phosphoglycerate. The polypeptide is 2,3-bisphosphoglycerate-dependent phosphoglycerate mutase (Nitratidesulfovibrio vulgaris (strain DP4) (Desulfovibrio vulgaris)).